Here is an 80-residue protein sequence, read N- to C-terminus: Cytochrome c oxidase subunit 7B, mitochondrial (80 aa).

Residues 1-24 constitute a mitochondrion transit peptide; it reads MFPLAKNALSRLRVQSIQQAVARQ. Residues 25–32 are Mitochondrial matrix-facing; it reads IHQKRAPD. A helical membrane pass occupies residues 33–59; sequence FHDKYGNAVLASGATFCVAVWVYMATQ. Topologically, residues 60 to 80 are mitochondrial intermembrane; sequence IGIEWNPSPVGRVTPKEWREQ.

It belongs to the cytochrome c oxidase VIIb family. Component of the cytochrome c oxidase (complex IV, CIV), a multisubunit enzyme composed of 14 subunits. The complex is composed of a catalytic core of 3 subunits MT-CO1, MT-CO2 and MT-CO3, encoded in the mitochondrial DNA, and 11 supernumerary subunits COX4I1 (or COX4I2), COX5A, COX5B, COX6A2 (or COX6A1), COX6B1 (or COX6B2), COX6C, COX7A1 (or COX7A2), COX7B, COX7C, COX8B and NDUFA4, which are encoded in the nuclear genome. The complex exists as a monomer or a dimer and forms supercomplexes (SCs) in the inner mitochondrial membrane with NADH-ubiquinone oxidoreductase (complex I, CI) and ubiquinol-cytochrome c oxidoreductase (cytochrome b-c1 complex, complex III, CIII), resulting in different assemblies (supercomplex SCI(1)III(2)IV(1) and megacomplex MCI(2)III(2)IV(2)).

It localises to the mitochondrion inner membrane. Its pathway is energy metabolism; oxidative phosphorylation. Functionally, component of the cytochrome c oxidase, the last enzyme in the mitochondrial electron transport chain which drives oxidative phosphorylation. The respiratory chain contains 3 multisubunit complexes succinate dehydrogenase (complex II, CII), ubiquinol-cytochrome c oxidoreductase (cytochrome b-c1 complex, complex III, CIII) and cytochrome c oxidase (complex IV, CIV), that cooperate to transfer electrons derived from NADH and succinate to molecular oxygen, creating an electrochemical gradient over the inner membrane that drives transmembrane transport and the ATP synthase. Cytochrome c oxidase is the component of the respiratory chain that catalyzes the reduction of oxygen to water. Electrons originating from reduced cytochrome c in the intermembrane space (IMS) are transferred via the dinuclear copper A center (CU(A)) of subunit 2 and heme A of subunit 1 to the active site in subunit 1, a binuclear center (BNC) formed by heme A3 and copper B (CU(B)). The BNC reduces molecular oxygen to 2 water molecules using 4 electrons from cytochrome c in the IMS and 4 protons from the mitochondrial matrix. Plays a role in proper central nervous system (CNS) development in vertebrates. The polypeptide is Cytochrome c oxidase subunit 7B, mitochondrial (COX7B) (Bos taurus (Bovine)).